Here is a 661-residue protein sequence, read N- to C-terminus: Putative core protein L410 (661 aa).

Over residues 1-11 the composition is skewed to basic and acidic residues; it reads MADNKGRRDTF. A disordered region spans residues 1–26; it reads MADNKGRRDTFDVSGDTNTNATSNKR. Residues 15 to 25 show a composition bias toward polar residues; it reads GDTNTNATSNK. Residues 112 to 140 are a coiled coil; sequence KKENKWSDKEYDEFRKELTNLLTGNRALE.

Its subcellular location is the virion. The sequence is that of Putative core protein L410 from Acanthamoeba polyphaga (Amoeba).